The following is a 382-amino-acid chain: Succinate--CoA ligase [ADP-forming] subunit beta (382 aa).

ATP is bound by residues lysine 46, 53–55, valine 95, and glutamate 100; that span reads GRG. Mg(2+)-binding residues include asparagine 192 and aspartate 206. Substrate-binding positions include asparagine 257 and 314 to 316; that span reads GIT.

The protein belongs to the succinate/malate CoA ligase beta subunit family. As to quaternary structure, heterotetramer of two alpha and two beta subunits. It depends on Mg(2+) as a cofactor.

It carries out the reaction succinate + ATP + CoA = succinyl-CoA + ADP + phosphate. It catalyses the reaction GTP + succinate + CoA = succinyl-CoA + GDP + phosphate. The protein operates within carbohydrate metabolism; tricarboxylic acid cycle; succinate from succinyl-CoA (ligase route): step 1/1. Succinyl-CoA synthetase functions in the citric acid cycle (TCA), coupling the hydrolysis of succinyl-CoA to the synthesis of either ATP or GTP and thus represents the only step of substrate-level phosphorylation in the TCA. The beta subunit provides nucleotide specificity of the enzyme and binds the substrate succinate, while the binding sites for coenzyme A and phosphate are found in the alpha subunit. The chain is Succinate--CoA ligase [ADP-forming] subunit beta from Bacteroides fragilis (strain ATCC 25285 / DSM 2151 / CCUG 4856 / JCM 11019 / LMG 10263 / NCTC 9343 / Onslow / VPI 2553 / EN-2).